A 480-amino-acid polypeptide reads, in one-letter code: NADH-quinone oxidoreductase subunit N 1 (480 aa).

14 consecutive transmembrane segments (helical) span residues 12 to 32 (LSMP…IGVF), 38 to 58 (TPTV…WLVL), 78 to 98 (FMKV…VGHA), 106 to 126 (FEFP…ISAN), 128 to 148 (LISL…VAAI), 163 to 183 (FVLG…VYGF), 203 to 223 (LGLV…ISAV), 241 to 261 (TAFF…RIVI), 271 to 291 (WQQI…FAAI), 303 to 323 (SSIG…MAGV), 326 to 346 (VILY…CILA), 372 to 392 (ATVL…AGFF), 396 to 416 (FVFV…GVLA), and 449 to 469 (LVFG…GPLG).

The protein belongs to the complex I subunit 2 family. NDH-1 is composed of 14 different subunits. Subunits NuoA, H, J, K, L, M, N constitute the membrane sector of the complex.

Its subcellular location is the cell inner membrane. It catalyses the reaction a quinone + NADH + 5 H(+)(in) = a quinol + NAD(+) + 4 H(+)(out). Functionally, NDH-1 shuttles electrons from NADH, via FMN and iron-sulfur (Fe-S) centers, to quinones in the respiratory chain. The immediate electron acceptor for the enzyme in this species is believed to be ubiquinone. Couples the redox reaction to proton translocation (for every two electrons transferred, four hydrogen ions are translocated across the cytoplasmic membrane), and thus conserves the redox energy in a proton gradient. The chain is NADH-quinone oxidoreductase subunit N 1 from Rhizobium meliloti (strain 1021) (Ensifer meliloti).